The primary structure comprises 499 residues: Aspartyl/glutamyl-tRNA(Asn/Gln) amidotransferase subunit B (499 aa).

It belongs to the GatB/GatE family. GatB subfamily. As to quaternary structure, heterotrimer of A, B and C subunits.

The enzyme catalyses L-glutamyl-tRNA(Gln) + L-glutamine + ATP + H2O = L-glutaminyl-tRNA(Gln) + L-glutamate + ADP + phosphate + H(+). It catalyses the reaction L-aspartyl-tRNA(Asn) + L-glutamine + ATP + H2O = L-asparaginyl-tRNA(Asn) + L-glutamate + ADP + phosphate + 2 H(+). Functionally, allows the formation of correctly charged Asn-tRNA(Asn) or Gln-tRNA(Gln) through the transamidation of misacylated Asp-tRNA(Asn) or Glu-tRNA(Gln) in organisms which lack either or both of asparaginyl-tRNA or glutaminyl-tRNA synthetases. The reaction takes place in the presence of glutamine and ATP through an activated phospho-Asp-tRNA(Asn) or phospho-Glu-tRNA(Gln). The chain is Aspartyl/glutamyl-tRNA(Asn/Gln) amidotransferase subunit B from Leifsonia xyli subsp. xyli (strain CTCB07).